Consider the following 642-residue polypeptide: Chaperone protein DnaK (642 aa).

T198 is subject to Phosphothreonine; by autocatalysis. Basic and acidic residues predominate over residues 578–589 (DDKEAIESRMQK). Positions 578–642 (DDKEAIESRM…FEEVKDGDKK (65 aa)) are disordered. Positions 603–619 (AEQAAQQGGDAGAQAED) are enriched in low complexity.

Belongs to the heat shock protein 70 family.

In terms of biological role, acts as a chaperone. The protein is Chaperone protein DnaK of Hahella chejuensis (strain KCTC 2396).